The primary structure comprises 85 residues: Large ribosomal subunit protein bL27 (85 aa).

Residues 1-22 (MAHKKAGGSTRNGRDSESKRLG) form a disordered region.

This sequence belongs to the bacterial ribosomal protein bL27 family.

This chain is Large ribosomal subunit protein bL27, found in Marinomonas sp. (strain MWYL1).